The chain runs to 173 residues: Ribosome maturation factor RimM (173 aa).

A PRC barrel domain is found at 98–171 (DDQYYYDEII…LITIDALEGL (74 aa)).

This sequence belongs to the RimM family. Binds ribosomal protein uS19.

It localises to the cytoplasm. Functionally, an accessory protein needed during the final step in the assembly of 30S ribosomal subunit, possibly for assembly of the head region. Essential for efficient processing of 16S rRNA. May be needed both before and after RbfA during the maturation of 16S rRNA. It has affinity for free ribosomal 30S subunits but not for 70S ribosomes. This Leuconostoc mesenteroides subsp. mesenteroides (strain ATCC 8293 / DSM 20343 / BCRC 11652 / CCM 1803 / JCM 6124 / NCDO 523 / NBRC 100496 / NCIMB 8023 / NCTC 12954 / NRRL B-1118 / 37Y) protein is Ribosome maturation factor RimM.